A 267-amino-acid polypeptide reads, in one-letter code: Integral membrane protein 2C (267 aa).

The residue at position 37 (Thr37) is a Phosphothreonine. Residues 55-75 (VGGVCYLSMGMVVLLMGLVFA) form a helical; Signal-anchor for type II membrane protein membrane-spanning segment. The region spanning 136–230 (FGGGDPADII…LCNGKDTYRL (95 aa)) is the BRICHOS domain. Residues Cys163 and Cys222 are joined by a disulfide bond. N-linked (GlcNAc...) asparagine glycosylation occurs at Asn169.

The protein belongs to the ITM2 family. Interacts with BACE1. Interacts with APP. Interacts with STMN2. In terms of processing, type I membrane-bound, as well as soluble, furin has a pre-eminent role in ITM2C proteolytic processing. PCSK7 and PCSK5 may also be involved although to a lesser extent. The soluble form of PCSK7 is incapable of processing ITM2C. Fails to undergo shedding by ADAM10 and intramembrane cleavage by SPPL2B. In terms of tissue distribution, high levels in the brain, specifically in the cerebral cortex, medulla, amygdala, hippocampus, thalamus, caudate nucleus, cerebellum, olfactory lobe and spinal cord. Very low levels in other organs.

The protein resides in the lysosome membrane. It localises to the cell membrane. Its function is as follows. Negative regulator of amyloid-beta peptide production. May inhibit the processing of APP by blocking its access to alpha- and beta-secretase. Binding to the beta-secretase-cleaved APP C-terminal fragment is negligible, suggesting that ITM2C is a poor gamma-secretase cleavage inhibitor. May play a role in TNF-induced cell death and neuronal differentiation. This chain is Integral membrane protein 2C (ITM2C), found in Homo sapiens (Human).